An 846-amino-acid chain; its full sequence is Translation initiation factor IF-2 (846 aa).

The interval 94-263 is disordered; sequence QRSPEEIQAE…HGFQNPTGPV (170 aa). Positions 96-135 are enriched in basic and acidic residues; the sequence is SPEEIQAEQKRELDERRAAENAARDKVEAEVRQRNEEQAR. Composition is skewed to low complexity over residues 136–148 and 158–176; these read RQAAGSAAAAPAP and AAPVAAPAPVVADAPASED. Composition is skewed to basic and acidic residues over residues 177-206 and 230-239; these read AAARAAERKKDETRRNESRTRDDDRRRGEA and TTDEESDGAR. The span at 240–253 shows a compositional bias: basic residues; that stretch reads RGRGGKSKLKKRNQ. The tr-type G domain maps to 346 to 513; that stretch reads SRAPVVTVMG…AVLLQAEILE (168 aa). The tract at residues 355–362 is G1; sequence GHVDHGKT. Residue 355–362 participates in GTP binding; it reads GHVDHGKT. Positions 380–384 are G2; sequence GITQH. Residues 401–404 are G3; that stretch reads DTPG. Residues 401 to 405 and 455 to 458 each bind GTP; these read DTPGH and NKID. Positions 455-458 are G4; that stretch reads NKID. Residues 491 to 493 form a G5 region; it reads SAK.

The protein belongs to the TRAFAC class translation factor GTPase superfamily. Classic translation factor GTPase family. IF-2 subfamily.

It is found in the cytoplasm. In terms of biological role, one of the essential components for the initiation of protein synthesis. Protects formylmethionyl-tRNA from spontaneous hydrolysis and promotes its binding to the 30S ribosomal subunits. Also involved in the hydrolysis of GTP during the formation of the 70S ribosomal complex. This chain is Translation initiation factor IF-2, found in Pseudomonas putida (strain ATCC 47054 / DSM 6125 / CFBP 8728 / NCIMB 11950 / KT2440).